Here is a 313-residue protein sequence, read N- to C-terminus: Glyoxylate/hydroxypyruvate reductase A HPR2 (313 aa).

Residues 152 to 155 (LGRI), 174 to 176 (SRT), 230 to 232 (IGR), and Asp-256 each bind NADP(+). Arg-232 is an active-site residue. Glu-261 is a catalytic residue. The active-site Proton donor is His-279. Position 279–281 (279–281 (HVG)) interacts with NADP(+).

This sequence belongs to the D-isomer specific 2-hydroxyacid dehydrogenase family. GyaR subfamily. As to quaternary structure, homodimer.

Its subcellular location is the cytoplasm. It carries out the reaction glycolate + NADP(+) = glyoxylate + NADPH + H(+). The enzyme catalyses (R)-glycerate + NAD(+) = 3-hydroxypyruvate + NADH + H(+). It catalyses the reaction (R)-glycerate + NADP(+) = 3-hydroxypyruvate + NADPH + H(+). Strongly inhibited by oxalate. In terms of biological role, catalyzes the NADPH-dependent reduction of glyoxylate and hydroxypyruvate (HP) into glycolate and glycerate in the cytoplasm, thus providing a cytosolic bypass to the photorespiratory core cycle. Mostly active in the presence of NADPH and hydroxypyruvate. This Arabidopsis thaliana (Mouse-ear cress) protein is Glyoxylate/hydroxypyruvate reductase A HPR2 (HPR2).